Reading from the N-terminus, the 273-residue chain is MATQALISSSSISTSAEAARQIIGSRISQSVTRKASFVVRAASTPPVKQGANRQLWFASKQSLSYLDGRLPGDFGFDPLGLSDPEGTGGFIEPKWLAYGEVINGRFAMLGAAGAIAPEILGKAGLIPQETALAWFQTGVIPPAGTYNYWADNYTLFVLEMALMGFAEHRRFQDWAKPGSMGKQYFLGLEKGLGGSGDPAYPGGPLFNPLGFGKDEKSMKELKLKEIKNGRLAMLAILGYFIQALVTGVGPYQNLLDHLADPVNNNVLTSLKFH.

Residues 1–32 (MATQALISSSSISTSAEAARQIIGSRISQSVT) constitute a chloroplast transit peptide. Arg33 carries the post-translational modification N2-acetylarginine. Trp56 is a chlorophyll b binding site. Chlorophyll a is bound by residues Phe76, Ser82, and Glu100. Arg105 contributes to the chlorophyll b binding site. Residues 106–126 (FAMLGAAGAIAPEILGKAGLI) traverse the membrane as a helical segment. Ile140, Glu167, and Arg170 together coordinate chlorophyll b. Chlorophyll a is bound by residues Lys224, Glu225, Asn228, Arg230, Gln242, and His257. A helical membrane pass occupies residues 231–251 (LAMLAILGYFIQALVTGVGPY).

Belongs to the light-harvesting chlorophyll a/b-binding (LHC) protein family. As to quaternary structure, the LHC complex consists of chlorophyll a-b binding proteins. Requires Binds at least 14 chlorophylls (8 Chl-a and 6 Chl-b) and carotenoids such as lutein and neoxanthin. as cofactor. Photoregulated by reversible phosphorylation of its threonine residues.

It localises to the plastid. The protein localises to the chloroplast thylakoid membrane. Its function is as follows. The light-harvesting complex (LHC) functions as a light receptor, it captures and delivers excitation energy to photosystems with which it is closely associated. The chain is Chlorophyll a-b binding protein 8, chloroplastic (CAB8) from Solanum lycopersicum (Tomato).